The following is a 429-amino-acid chain: Glutamate-1-semialdehyde 2,1-aminomutase (429 aa).

N6-(pyridoxal phosphate)lysine is present on Lys-267.

This sequence belongs to the class-III pyridoxal-phosphate-dependent aminotransferase family. HemL subfamily. In terms of assembly, homodimer. Pyridoxal 5'-phosphate serves as cofactor.

Its subcellular location is the cytoplasm. The catalysed reaction is (S)-4-amino-5-oxopentanoate = 5-aminolevulinate. Its pathway is porphyrin-containing compound metabolism; protoporphyrin-IX biosynthesis; 5-aminolevulinate from L-glutamyl-tRNA(Glu): step 2/2. The protein is Glutamate-1-semialdehyde 2,1-aminomutase of Xanthomonas oryzae pv. oryzae (strain PXO99A).